The chain runs to 328 residues: Putative potassium channel protein YugO (328 aa).

The next 3 membrane-spanning stretches (helical) occupy residues 19–39, 42–62, and 73–93; these read IGVIILCLILLFGQIIYILEP, FTSVFEGIWWAVVTVSTVGYG, and AAGILLILSGASFVTAYFATL. The region spanning 114–238 is the RCK N-terminal domain; it reads RDHIILIGWN…ERAGANQIIG (125 aa).

The protein localises to the cell membrane. The chain is Putative potassium channel protein YugO (yugO) from Bacillus subtilis (strain 168).